The following is a 340-amino-acid chain: Chitinase 7 (340 aa).

An N-terminal signal peptide occupies residues 1 to 32 (MIAARAANLQVAMKALALAVLALAYAAATARA). The Chitin-binding type-1 domain occupies 33–73 (EQCGRQAGGARCPNRLCCSRWGWCGLTDDYCKGGCQSQCRV). Cystine bridges form between cysteine 35–cysteine 50, cysteine 44–cysteine 56, cysteine 49–cysteine 63, cysteine 67–cysteine 71, cysteine 118–cysteine 173, cysteine 185–cysteine 193, and cysteine 293–cysteine 323.

It belongs to the glycosyl hydrolase 19 family. Chitinase class I subfamily. As to expression, expressed in pistils, stamens and lodicules.

It carries out the reaction Random endo-hydrolysis of N-acetyl-beta-D-glucosaminide (1-&gt;4)-beta-linkages in chitin and chitodextrins.. Functionally, hydrolyzes chitin and may play a role in defense against fungal pathogens containing chitin. In Oryza sativa subsp. japonica (Rice), this protein is Chitinase 7 (Cht7).